A 1413-amino-acid chain; its full sequence is DNA-directed RNA polymerase subunit beta' (1413 aa).

Zn(2+)-binding residues include C70, C72, C85, and C88. Residues D460, D462, and D464 each contribute to the Mg(2+) site. Residues C814, C888, C895, and C898 each contribute to the Zn(2+) site.

It belongs to the RNA polymerase beta' chain family. As to quaternary structure, the RNAP catalytic core consists of 2 alpha, 1 beta, 1 beta' and 1 omega subunit. When a sigma factor is associated with the core the holoenzyme is formed, which can initiate transcription. It depends on Mg(2+) as a cofactor. Zn(2+) serves as cofactor.

The catalysed reaction is RNA(n) + a ribonucleoside 5'-triphosphate = RNA(n+1) + diphosphate. In terms of biological role, DNA-dependent RNA polymerase catalyzes the transcription of DNA into RNA using the four ribonucleoside triphosphates as substrates. The chain is DNA-directed RNA polymerase subunit beta' from Bordetella avium (strain 197N).